Reading from the N-terminus, the 254-residue chain is 5'-nucleotidase SurE (254 aa).

A divalent metal cation is bound by residues Asp8, Asp9, Ser40, and Asn93.

This sequence belongs to the SurE nucleotidase family. The cofactor is a divalent metal cation.

The protein localises to the cytoplasm. It catalyses the reaction a ribonucleoside 5'-phosphate + H2O = a ribonucleoside + phosphate. Nucleotidase that shows phosphatase activity on nucleoside 5'-monophosphates. The polypeptide is 5'-nucleotidase SurE (Rhizorhabdus wittichii (strain DSM 6014 / CCUG 31198 / JCM 15750 / NBRC 105917 / EY 4224 / RW1) (Sphingomonas wittichii)).